A 145-amino-acid polypeptide reads, in one-letter code: Immune protein Tsi3 (145 aa).

The signal sequence occupies residues 1–15 (MKTVALILASLALLA). A lipid anchor (N-palmitoyl cysteine) is attached at C16. A lipid anchor (S-diacylglycerol cysteine) is attached at C16. The interval 53–85 (FDEGGKLRNPRQLEVQRQDAPPPPDLASRRLGD) is disordered. E126 provides a ligand contact to Ca(2+).

As to quaternary structure, forms a heterotetramer with Tse3 consisting of two Tse3 dimers and two Tsi3 dimers. Formation of the complex inactivates Tse3 enzymatic activity.

In terms of biological role, immunity protein that plays a role in preventing early activation of toxin Tse3. Occupies Tse3 substrate binding site and prevents the substrate from entering. This Pseudomonas aeruginosa (strain ATCC 15692 / DSM 22644 / CIP 104116 / JCM 14847 / LMG 12228 / 1C / PRS 101 / PAO1) protein is Immune protein Tsi3.